The following is a 242-amino-acid chain: Pyridoxine 5'-phosphate synthase (242 aa).

Asn7 lines the 3-amino-2-oxopropyl phosphate pocket. 9-10 (DH) is a 1-deoxy-D-xylulose 5-phosphate binding site. Arg18 is a 3-amino-2-oxopropyl phosphate binding site. The Proton acceptor role is filled by His43. Positions 45 and 50 each coordinate 1-deoxy-D-xylulose 5-phosphate. Catalysis depends on Glu70, which acts as the Proton acceptor. Thr100 is a binding site for 1-deoxy-D-xylulose 5-phosphate. His191 functions as the Proton donor in the catalytic mechanism. 3-amino-2-oxopropyl phosphate-binding positions include Gly192 and 213 to 214 (GH).

This sequence belongs to the PNP synthase family. As to quaternary structure, homooctamer; tetramer of dimers.

The protein resides in the cytoplasm. It catalyses the reaction 3-amino-2-oxopropyl phosphate + 1-deoxy-D-xylulose 5-phosphate = pyridoxine 5'-phosphate + phosphate + 2 H2O + H(+). It functions in the pathway cofactor biosynthesis; pyridoxine 5'-phosphate biosynthesis; pyridoxine 5'-phosphate from D-erythrose 4-phosphate: step 5/5. In terms of biological role, catalyzes the complicated ring closure reaction between the two acyclic compounds 1-deoxy-D-xylulose-5-phosphate (DXP) and 3-amino-2-oxopropyl phosphate (1-amino-acetone-3-phosphate or AAP) to form pyridoxine 5'-phosphate (PNP) and inorganic phosphate. The protein is Pyridoxine 5'-phosphate synthase of Chromobacterium violaceum (strain ATCC 12472 / DSM 30191 / JCM 1249 / CCUG 213 / NBRC 12614 / NCIMB 9131 / NCTC 9757 / MK).